We begin with the raw amino-acid sequence, 734 residues long: Protein arginine N-methyltransferase 5 (734 aa).

Residues 1–16 (MSNRTYADNLFPQQVA) are compositionally biased toward polar residues. The segment at 1-39 (MSNRTYADNLFPQQVAEQHEEQMSSGSSPKSNSPSRSIS) is disordered. A compositionally biased stretch (low complexity) spans 24–39 (SSGSSPKSNSPSRSIS). Residues 42–329 (EAANSRIHIG…EYSQALRHAV (288 aa)) are TIM barrel. Residues 360 to 706 (LQAPLQPLSE…VDNTGVWYEW (347 aa)) enclose the SAM-dependent MTase PRMT-type domain. Residue Tyr-376 participates in S-adenosyl-L-methionine binding. An a protein-binding site is contributed by Phe-379. S-adenosyl-L-methionine-binding positions include 385 to 386 (KY), Glu-450, and 477 to 478 (DM). Positions 499 and 508 each coordinate a protein. Active-site proton donor/acceptor residues include Glu-499 and Glu-508. The segment at 529–734 (PQKYTSYVKP…PNGESYYMRM (206 aa)) is beta barrel. The dimerization stretch occupies residues 541–589 (STHIHQTIKAQSIPYLSRAIPSHGRGEPELDEDEMWIQKYPQGHVRNNM).

Belongs to the class I-like SAM-binding methyltransferase superfamily. Protein arginine N-methyltransferase family. Homodimer. Interacts with cep-1 (via C-terminus domain); does not methylate cep-1. Interacts with cbp-1 (via N-terminus domain and HAT domain); the interaction results in methylation of cbp-1. Component of a complex that contains cep-1 and cbp-1. May interact with pid-2, pid-4 and pid-5.

It localises to the nucleus. It carries out the reaction L-arginyl-[protein] + 2 S-adenosyl-L-methionine = N(omega),N(omega)'-dimethyl-L-arginyl-[protein] + 2 S-adenosyl-L-homocysteine + 2 H(+). In terms of biological role, catalyzes the symmetrical dimethylation of arginine residues in targets such as small nuclear ribonucleoproteins, histone H2A/H4 and cbp-1. Dimethylation occurs in a distributive manner where the protein is released after the addition of the first methyl group prior to rebinding for the addition of the second methyl group. Plays a role in the negative regulation of DNA damage-induced apoptosis. By methylating cbp-1, may prevent apoptosis by repressing the capacity of cbp-1 to enhance cep-1 dependent transcription activation of the programmed cell death activator egl-1. Plays a role in heat and oxidative stress resistance. The sequence is that of Protein arginine N-methyltransferase 5 from Caenorhabditis elegans.